The primary structure comprises 259 residues: MLIVVSPAKTLDYETPLPTSAFTQPDFISDSAELIKACRTLTPVDIAKLMKVSDKIASLNAVRFEEWSTTFTQENARPALFAFKGDVYTGLDANSLSESEIEYAQTNLRMLSGLYGLLKPLDLMQPYRLEMGTKLENGRGSNLYQFWGSLITNKLNQELEAQGSETLVNLASNEYFKSVKPKELKADIVTPVFKDCKNGQYKVISFYAKKARGLMARFIIQNKISNVEELKSFDSDGYYFVEAESTATTLVFKREEQNK.

It belongs to the UPF0246 family.

The protein is UPF0246 protein VFMJ11_2214 of Aliivibrio fischeri (strain MJ11) (Vibrio fischeri).